Here is a 122-residue protein sequence, read N- to C-terminus: Large ribosomal subunit protein uL14 (122 aa).

This sequence belongs to the universal ribosomal protein uL14 family. As to quaternary structure, part of the 50S ribosomal subunit. Forms a cluster with proteins L3 and L19. In the 70S ribosome, L14 and L19 interact and together make contacts with the 16S rRNA in bridges B5 and B8.

Functionally, binds to 23S rRNA. Forms part of two intersubunit bridges in the 70S ribosome. The sequence is that of Large ribosomal subunit protein uL14 from Phytoplasma mali (strain AT).